We begin with the raw amino-acid sequence, 209 residues long: Uracil phosphoribosyltransferase (209 aa).

5-phospho-alpha-D-ribose 1-diphosphate contacts are provided by residues Arg-79, Arg-104, and 131 to 139; that span reads DPMLATGGS. Uracil contacts are provided by residues Ile-194 and 199–201; that span reads GDA. Position 200 (Asp-200) interacts with 5-phospho-alpha-D-ribose 1-diphosphate.

It belongs to the UPRTase family. Requires Mg(2+) as cofactor.

The enzyme catalyses UMP + diphosphate = 5-phospho-alpha-D-ribose 1-diphosphate + uracil. Its pathway is pyrimidine metabolism; UMP biosynthesis via salvage pathway; UMP from uracil: step 1/1. Its activity is regulated as follows. Allosterically activated by GTP. In terms of biological role, catalyzes the conversion of uracil and 5-phospho-alpha-D-ribose 1-diphosphate (PRPP) to UMP and diphosphate. The chain is Uracil phosphoribosyltransferase from Streptococcus pyogenes serotype M49 (strain NZ131).